Here is a 547-residue protein sequence, read N- to C-terminus: Type I inositol polyphosphate 5-phosphatase 4 (547 aa).

The span at 56 to 67 (CSVRKSKTETRS) shows a compositional bias: basic and acidic residues. Residues 56–80 (CSVRKSKTETRSKRNSGRARRNKLD) are disordered. 2 catalytic regions span residues 387-402 (DRVI…IALS) and 467-482 (KRRT…WHGS).

Belongs to the inositol polyphosphate 5-phosphatase family.

This chain is Type I inositol polyphosphate 5-phosphatase 4, found in Arabidopsis thaliana (Mouse-ear cress).